We begin with the raw amino-acid sequence, 355 residues long: Uroporphyrinogen decarboxylase (355 aa).

Substrate-binding positions include Arg36–Arg40, Asp85, Tyr160, Ser215, and His334.

Belongs to the uroporphyrinogen decarboxylase family. In terms of assembly, homodimer.

Its subcellular location is the cytoplasm. It catalyses the reaction uroporphyrinogen III + 4 H(+) = coproporphyrinogen III + 4 CO2. It functions in the pathway porphyrin-containing compound metabolism; protoporphyrin-IX biosynthesis; coproporphyrinogen-III from 5-aminolevulinate: step 4/4. Catalyzes the decarboxylation of four acetate groups of uroporphyrinogen-III to yield coproporphyrinogen-III. This chain is Uroporphyrinogen decarboxylase, found in Rhodococcus opacus (strain B4).